The following is a 475-amino-acid chain: L-ornithine N(5)-monooxygenase (475 aa).

Residues 65-73 and Gln-84 contribute to the FAD site; that span reads ERQPEFGWH. Lys-89 contacts substrate. Val-150 is a binding site for FAD. 238 to 241 provides a ligand contact to NADP(+); that stretch reads GGQS. Substrate contacts are provided by residues 277 to 280 and Asn-307; that span reads NEIF. Position 307–309 (307–309) interacts with NADP(+); that stretch reads NYG. 446–448 contributes to the FAD binding site; the sequence is SLL. Ser-449 is a binding site for substrate.

This sequence belongs to the lysine N(6)-hydroxylase/L-ornithine N(5)-oxygenase family. As to quaternary structure, homotetramer. The cofactor is FAD.

The enzyme catalyses L-ornithine + NADPH + O2 = N(5)-hydroxy-L-ornithine + NADP(+) + H2O. It catalyses the reaction L-ornithine + NADH + O2 = N(5)-hydroxy-L-ornithine + NAD(+) + H2O. It participates in siderophore biosynthesis. Functionally, L-ornithine N(5)-monooxygenase; part of the gene cluster that mediates the biosynthesis of hydroxamate-containing siderophores that play a critical role in virulence via intracellular iron acquisition during macrophage infection. SID1 catalyzes the conversion of L-ornithine to N(5)-hydroxyornithine, the first step in the biosynthesis of all hydroxamate-containing siderophores. This is L-ornithine N(5)-monooxygenase from Ajellomyces capsulatus (Darling's disease fungus).